The following is a 239-amino-acid chain: Segregation and condensation protein A (239 aa).

This sequence belongs to the ScpA family. In terms of assembly, component of a cohesin-like complex composed of ScpA, ScpB and the Smc homodimer, in which ScpA and ScpB bind to the head domain of Smc. The presence of the three proteins is required for the association of the complex with DNA.

It is found in the cytoplasm. Functionally, participates in chromosomal partition during cell division. May act via the formation of a condensin-like complex containing Smc and ScpB that pull DNA away from mid-cell into both cell halves. The polypeptide is Segregation and condensation protein A (Streptococcus suis (strain 98HAH33)).